The primary structure comprises 108 residues: Synaptobrevin-1 (108 aa).

Residues 1 to 25 (MDAQGDAGAQGGSQGPRPSNKRLQQ) form a disordered region. The Cytoplasmic segment spans residues 1 to 85 (MDAQGDAGAQ…KRKYWWKNIK (85 aa)). Residues 22 to 82 (RLQQTQAQVD…ATLKRKYWWK (61 aa)) form the v-SNARE coiled-coil homology domain. Residues 86-106 (MMIIMCAIVVILIIIIVLWAG) traverse the membrane as a helical; Anchor for type IV membrane protein segment. At 107-108 (GK) the chain is on the extracellular side.

The protein belongs to the synaptobrevin family. In terms of assembly, part of the SNARE core complex containing CBG09569/SNAP25, snb-1/VAMP2 and CBG03570/STX1A. This complex binds to cpx-1/CPLX1.

The protein resides in the cytoplasmic vesicle. It localises to the secretory vesicle. The protein localises to the synaptic vesicle membrane. It is found in the cell membrane. Its subcellular location is the synapse. The protein resides in the synaptosome. In terms of biological role, involved in the targeting and/or fusion of transport vesicles to their target membrane. Acts in neuronal exocytosis of synaptic transmission. Likely to have a role in cholinergic transmisson. Required for viability, coordinated movement and M3 pharynx motor neuron function. The protein is Synaptobrevin-1 of Caenorhabditis briggsae.